The chain runs to 36 residues: Photosystem I reaction center subunit VIII (36 aa).

The chain crosses the membrane as a helical span at residues 8–28 (SIFVPLVGLVFPAIAMASLFL).

This sequence belongs to the PsaI family.

The protein resides in the plastid. It localises to the chloroplast thylakoid membrane. In terms of biological role, may help in the organization of the PsaL subunit. This is Photosystem I reaction center subunit VIII from Solanum bulbocastanum (Wild potato).